The sequence spans 981 residues: uncharacterized protein (981 aa).

The 78-residue stretch at 535–612 (VLLNPVAIEI…SIASIIQKKS (78 aa)) folds into the Carrier domain. Ser-571 is modified (O-(pantetheine 4'-phosphoryl)serine).

Belongs to the ATP-dependent AMP-binding enzyme family.

This is an uncharacterized protein from Schizosaccharomyces pombe (strain 972 / ATCC 24843) (Fission yeast).